The sequence spans 320 residues: MPFWYRPVTWAWLLLPLALLFKMISFCRRLAYQKGFFKRYKSKLPVIIVGNISVGGNGKTPFVIWLCEMLITVGYKPAVISRGYGGKSNHYPLLVGDHIKGHEAGDEPVLIHKRLGIPVVVDPNRKNAVKYIEQHFLADIIISDDGLQHYALQRDIEIVIVDGKRRFGNQHLMPIGPLRENLSRLNSVDFVVNNGGQQVNEITMLLKAQNCQRVDGETAQLSSGVQVNACAAIGYPQRFFDTLNQQQFEILKAVGFNDHHAFSKDDFTQFEASIPLLMTEKDAVKCTDFAQPNWWYLPVSAEFSAGFEQQLLNRIKEIKC.

53 to 60 (SVGGNGKT) is an ATP binding site.

Belongs to the LpxK family.

It catalyses the reaction a lipid A disaccharide + ATP = a lipid IVA + ADP + H(+). It participates in glycolipid biosynthesis; lipid IV(A) biosynthesis; lipid IV(A) from (3R)-3-hydroxytetradecanoyl-[acyl-carrier-protein] and UDP-N-acetyl-alpha-D-glucosamine: step 6/6. Its function is as follows. Transfers the gamma-phosphate of ATP to the 4'-position of a tetraacyldisaccharide 1-phosphate intermediate (termed DS-1-P) to form tetraacyldisaccharide 1,4'-bis-phosphate (lipid IVA). The polypeptide is Tetraacyldisaccharide 4'-kinase (Psychromonas ingrahamii (strain DSM 17664 / CCUG 51855 / 37)).